Here is a 343-residue protein sequence, read N- to C-terminus: Protein RecA (343 aa).

66-73 (GPESSGKT) contacts ATP.

The protein belongs to the RecA family.

The protein resides in the cytoplasm. Functionally, can catalyze the hydrolysis of ATP in the presence of single-stranded DNA, the ATP-dependent uptake of single-stranded DNA by duplex DNA, and the ATP-dependent hybridization of homologous single-stranded DNAs. It interacts with LexA causing its activation and leading to its autocatalytic cleavage. The protein is Protein RecA of Nitrosomonas eutropha (strain DSM 101675 / C91 / Nm57).